The primary structure comprises 527 residues: Catalase (527 aa).

A compositionally biased stretch (basic and acidic residues) spans 1-22 (MADSRDPASDQMKLWKEQRAAQ). The tract at residues 1–34 (MADSRDPASDQMKLWKEQRAAQKPDVLTTGGGNP) is disordered. An N-acetylalanine modification is found at A2. At S9 the chain carries Phosphoserine. The residue at position 13 (K13) is an N6-succinyllysine. Catalysis depends on residues H75 and N148. NADP(+) is bound by residues H194, S201, R203, and N213. At K221 the chain carries N6-succinyllysine. Position 233 is an N6-acetyllysine (K233). 3 residues coordinate NADP(+): K237, W303, and H305. Residue Y358 participates in heme binding. A phosphoserine mark is found at S422 and S434. K449 and K480 each carry N6-acetyllysine; alternate. An N6-succinyllysine; alternate mark is found at K449 and K480. K499 bears the N6-acetyllysine mark. Residue T511 is modified to Phosphothreonine. S517 is subject to Phosphoserine. A Microbody targeting signal; atypical motif is present at residues 524-527 (KANL).

The protein belongs to the catalase family. As to quaternary structure, homotetramer. Interacts (via microbody targeting signal) with PEX5, monomeric form interacts with PEX5, leading to its translocation into peroxisomes. It depends on heme as a cofactor. NADP(+) is required as a cofactor.

The protein resides in the peroxisome matrix. The enzyme catalyses 2 H2O2 = O2 + 2 H2O. Functionally, catalyzes the degradation of hydrogen peroxide (H(2)O(2)) generated by peroxisomal oxidases to water and oxygen, thereby protecting cells from the toxic effects of hydrogen peroxide. Promotes growth of cells including T-cells, B-cells, myeloid leukemia cells, melanoma cells, mastocytoma cells and normal and transformed fibroblast cells. The sequence is that of Catalase (CAT) from Canis lupus familiaris (Dog).